The chain runs to 599 residues: Sulfite reductase [NADPH] flavoprotein alpha-component (599 aa).

Residues 64–202 (ITLISASQTG…VAAQWRARIV (139 aa)) enclose the Flavodoxin-like domain. FMN contacts are provided by residues 70–75 (SQTGNA), 117–120 (STQG), and 153–162 (LGDTSYEFFC). The region spanning 234-448 (EAPLRASLSV…IEHNDNFRLP (215 aa)) is the FAD-binding FR-type domain. Residues Thr322, Ala356, 386–389 (RLYS), 404–406 (TVG), Tyr410, and 419–422 (GGAS) each bind FAD. NADP(+)-binding positions include 519-520 (SR), 525-529 (KIYVQ), and Asp561. FAD is bound at residue Tyr599.

Belongs to the NADPH-dependent sulphite reductase flavoprotein subunit CysJ family. It in the N-terminal section; belongs to the flavodoxin family. This sequence in the C-terminal section; belongs to the flavoprotein pyridine nucleotide cytochrome reductase family. Alpha(8)-beta(8). The alpha component is a flavoprotein, the beta component is a hemoprotein. FAD is required as a cofactor. Requires FMN as cofactor.

It catalyses the reaction hydrogen sulfide + 3 NADP(+) + 3 H2O = sulfite + 3 NADPH + 4 H(+). Its pathway is sulfur metabolism; hydrogen sulfide biosynthesis; hydrogen sulfide from sulfite (NADPH route): step 1/1. Component of the sulfite reductase complex that catalyzes the 6-electron reduction of sulfite to sulfide. This is one of several activities required for the biosynthesis of L-cysteine from sulfate. The flavoprotein component catalyzes the electron flow from NADPH -&gt; FAD -&gt; FMN to the hemoprotein component. The protein is Sulfite reductase [NADPH] flavoprotein alpha-component of Salmonella arizonae (strain ATCC BAA-731 / CDC346-86 / RSK2980).